The primary structure comprises 214 residues: Sugar transporter SWEET1 (214 aa).

A run of 7 helical transmembrane segments spans residues 3 to 23, 38 to 58, 65 to 85, 93 to 113, 125 to 145, 157 to 177, and 181 to 201; these read WMWLLSGACIVFTLGMFSSGL, IQFLPFLTTDLNNLGWFYYGY, LIIVNLIGASLQTLYMAAYIL, VVSQVLVSLGVLFLAHCYFTL, LGLFCSIFTISMYLSPLADLA, SFPLTVATFLTSTSWVLYGWV, and LYITVPNFPGIVTSLLRFWLF. In terms of domain architecture, MtN3/slv 1 spans 6–89; the sequence is LLSGACIVFT…MAAYILYSLE (84 aa). The MtN3/slv 2 domain occupies 124–207; it reads QLGLFCSIFT…FWLFSRYPPD (84 aa).

The protein belongs to the SWEET sugar transporter family.

The protein localises to the golgi apparatus membrane. It is found in the cell membrane. In terms of biological role, mediates sugar transport across membranes. This is Sugar transporter SWEET1 (slc50a1) from Xenopus tropicalis (Western clawed frog).